A 190-amino-acid chain; its full sequence is Protein GrpE (190 aa).

Disordered stretches follow at residues 1 to 22 and 170 to 190; these read MAEETNQSLEDQNVQVEEGQTI and EEGESKQSIRPARVKVGKPQS. Over residues 181 to 190 the composition is skewed to basic residues; sequence ARVKVGKPQS.

The protein belongs to the GrpE family. Homodimer.

It is found in the cytoplasm. In terms of biological role, participates actively in the response to hyperosmotic and heat shock by preventing the aggregation of stress-denatured proteins, in association with DnaK and GrpE. It is the nucleotide exchange factor for DnaK and may function as a thermosensor. Unfolded proteins bind initially to DnaJ; upon interaction with the DnaJ-bound protein, DnaK hydrolyzes its bound ATP, resulting in the formation of a stable complex. GrpE releases ADP from DnaK; ATP binding to DnaK triggers the release of the substrate protein, thus completing the reaction cycle. Several rounds of ATP-dependent interactions between DnaJ, DnaK and GrpE are required for fully efficient folding. In Leptospira biflexa serovar Patoc (strain Patoc 1 / Ames), this protein is Protein GrpE.